A 973-amino-acid polypeptide reads, in one-letter code: E3 ubiquitin-protein ligase BRE1A (973 aa).

Residues 1–37 form a disordered region; sequence MSGIGNKRAAGEPGTSMPPEKKTAVEDSGTTVETIKL. The residue at position 21 (Lys21) is an N6-acetyllysine. Phosphoserine is present on Ser41. A coiled-coil region spans residues 43–90; the sequence is TEELDIRTLQSKNRKLAEMLDQRQAIEDELREHIEKLERRQATDDASL. A disordered region spans residues 128 to 153; it reads VVPEPEPDSDSNQERKDDRERGDGQE. Phosphoserine is present on residues Ser136 and Ser138. Over residues 139-151 the composition is skewed to basic and acidic residues; sequence NQERKDDRERGDG. Coiled coils occupy residues 168–378 and 429–896; these read EEME…VKET and SLHK…TTKK. 2 positions are modified to N6-acetyllysine: Lys348 and Lys510. The disordered stretch occupies residues 507-620; the sequence is DLNKTRLRSG…GKHDDGRKKE (114 aa). Residue Ser522 is modified to Phosphoserine. Basic and acidic residues-rich tracts occupy residues 527–544 and 553–620; these read EDPK…EDLA and SQED…RKKE. The residue at position 560 (Ser560) is a Phosphoserine. The segment at 920-959 adopts an RING-type zinc-finger fold; it reads CPCCNMRKKDAVLTKCFHVFCFECVKTRYDTRQRKCPKCN.

It belongs to the BRE1 family. Component of the RNF20/40 complex (also known as BRE1 complex) probably composed of 2 copies of RNF20/BRE1A and 2 copies of RNF40/BRE1B. Interacts with UBE2E1/UBCH6. Interacts with p53/TP53 and WAC. Interacts with PAF1; the interaction mediates the association of the PAF1 and RNF20/40 complexes which is a prerequsite for recruitment of UBE2A/B. Interacts with PA2G4. Interacts with FBXL19.

Its subcellular location is the nucleus. It carries out the reaction S-ubiquitinyl-[E2 ubiquitin-conjugating enzyme]-L-cysteine + [acceptor protein]-L-lysine = [E2 ubiquitin-conjugating enzyme]-L-cysteine + N(6)-ubiquitinyl-[acceptor protein]-L-lysine.. Its pathway is protein modification; protein ubiquitination. In terms of biological role, component of the RNF20/40 E3 ubiquitin-protein ligase complex that mediates monoubiquitination of 'Lys-120' of histone H2B (H2BK120ub1). H2BK120ub1 gives a specific tag for epigenetic transcriptional activation and is also prerequisite for histone H3 'Lys-4' and 'Lys-79' methylation (H3K4me and H3K79me, respectively). It thereby plays a central role in histone code and gene regulation. The RNF20/40 complex forms a H2B ubiquitin ligase complex in cooperation with the E2 enzyme UBE2A or UBE2B; reports about the cooperation with UBE2E1/UBCH are contradictory. Required for transcriptional activation of Hox genes. Recruited to the MDM2 promoter, probably by being recruited by p53/TP53, and thereby acts as a transcriptional coactivator. Mediates the polyubiquitination of PA2G4 leading to its proteasome-mediated degradation. The sequence is that of E3 ubiquitin-protein ligase BRE1A (Rnf20) from Mus musculus (Mouse).